Consider the following 162-residue polypeptide: SsrA-binding protein (162 aa).

The protein belongs to the SmpB family.

It is found in the cytoplasm. Required for rescue of stalled ribosomes mediated by trans-translation. Binds to transfer-messenger RNA (tmRNA), required for stable association of tmRNA with ribosomes. tmRNA and SmpB together mimic tRNA shape, replacing the anticodon stem-loop with SmpB. tmRNA is encoded by the ssrA gene; the 2 termini fold to resemble tRNA(Ala) and it encodes a 'tag peptide', a short internal open reading frame. During trans-translation Ala-aminoacylated tmRNA acts like a tRNA, entering the A-site of stalled ribosomes, displacing the stalled mRNA. The ribosome then switches to translate the ORF on the tmRNA; the nascent peptide is terminated with the 'tag peptide' encoded by the tmRNA and targeted for degradation. The ribosome is freed to recommence translation, which seems to be the essential function of trans-translation. This is SsrA-binding protein from Colwellia psychrerythraea (strain 34H / ATCC BAA-681) (Vibrio psychroerythus).